The sequence spans 149 residues: Large ribosomal subunit protein uL22c (149 aa).

Belongs to the universal ribosomal protein uL22 family. As to quaternary structure, part of the 50S ribosomal subunit.

The protein resides in the plastid. Its subcellular location is the chloroplast. This protein binds specifically to 23S rRNA. Functionally, the globular domain of the protein is located near the polypeptide exit tunnel on the outside of the subunit, while an extended beta-hairpin is found that lines the wall of the exit tunnel in the center of the 70S ribosome. The polypeptide is Large ribosomal subunit protein uL22c (rpl22) (Brachypodium distachyon (Purple false brome)).